We begin with the raw amino-acid sequence, 301 residues long: Phosducin-like protein (301 aa).

T2 carries the post-translational modification N-acetylthreonine. The segment at 17-60 (YSTSEDEDSDHEDKDRGRGAPAISSTPAEAELAGEGISINTGPK) is disordered. Phosphoserine is present on residues S20, S25, S226, S293, and S296. The region spanning 36 to 299 (APAISSTPAE…TCHSEDSDLE (264 aa)) is the Phosducin domain. The segment at 158-301 (FKQVFEIPSG…HSEDSDLEID (144 aa)) is thioredoxin fold.

This sequence belongs to the phosducin family. In terms of assembly, forms a complex with the beta and gamma subunits of the GTP-binding protein, transducin. Interacts with the CCT chaperonin complex.

It is found in the cell projection. It localises to the cilium. Its function is as follows. Functions as a co-chaperone for CCT in the assembly of heterotrimeric G protein complexes, facilitates the assembly of both Gbeta-Ggamma and RGS-Gbeta5 heterodimers. Also acts as a positive regulator of hedgehog signaling and regulates ciliary function. This Mus musculus (Mouse) protein is Phosducin-like protein (Pdcl).